The chain runs to 390 residues: MRYITAGESHGPQLTTIIEGVPAGLPLVADDINEELARRQKGYGRGRRMQIETDQVQIVSGVRHGETLGSPIALVVENRDFAHWTKIMGAEPLTEQEEKEMKRKVTKPRPGHADLNGAIKYGHRDMRNVLERSSARETTVRVAAGAVAKKVLAELGIAVAGHVIEIGGVQAKETTYRSIEELKSITEASPVRCLDEEAGNQMIKAIDDAKSNGDSIGGIVEVIVEGMPIGVGSYVHYDRKLDAKLAAAIMSINAFKGVEIGIGFEAAHRPGSEVHDEILWDEEHGYTRRTNNAGGLEGGMTTGMPIVVRGVMKPIPTLYKPLQSVDIDTKEPFTASIERSDSCAVPAASVVAEAVVAWELATALIEQFGLDRMDLIRENIEKHNEYARGF.

Residues Arg-39 and Arg-45 each coordinate NADP(+). A disordered region spans residues 95 to 117; that stretch reads EQEEKEMKRKVTKPRPGHADLNG. FMN-binding positions include 132–134, 253–254, Gly-298, 313–317, and Arg-339; these read RSS, NA, and KPIPT.

Belongs to the chorismate synthase family. In terms of assembly, homotetramer. FMNH2 serves as cofactor.

It carries out the reaction 5-O-(1-carboxyvinyl)-3-phosphoshikimate = chorismate + phosphate. The protein operates within metabolic intermediate biosynthesis; chorismate biosynthesis; chorismate from D-erythrose 4-phosphate and phosphoenolpyruvate: step 7/7. In terms of biological role, catalyzes the anti-1,4-elimination of the C-3 phosphate and the C-6 proR hydrogen from 5-enolpyruvylshikimate-3-phosphate (EPSP) to yield chorismate, which is the branch point compound that serves as the starting substrate for the three terminal pathways of aromatic amino acid biosynthesis. This reaction introduces a second double bond into the aromatic ring system. This chain is Chorismate synthase 1, found in Bacillus cereus (strain ZK / E33L).